The following is a 212-amino-acid chain: Membrane-bound lytic murein transglycosylase E (212 aa).

Belongs to the transglycosylase Slt family.

It carries out the reaction Exolytic cleavage of the (1-&gt;4)-beta-glycosidic linkage between N-acetylmuramic acid (MurNAc) and N-acetylglucosamine (GlcNAc) residues in peptidoglycan, from either the reducing or the non-reducing ends of the peptidoglycan chains, with concomitant formation of a 1,6-anhydrobond in the MurNAc residue.. Functionally, murein-degrading enzyme. May play a role in recycling of muropeptides during cell elongation and/or cell division. The chain is Membrane-bound lytic murein transglycosylase E (mltE) from Buchnera aphidicola subsp. Baizongia pistaciae (strain Bp).